A 480-amino-acid chain; its full sequence is Probable efflux pump outer membrane protein SepC (480 aa).

A signal peptide spans 1 to 16 (MKTHYLSIALSVALSG). Cysteine 17 carries the N-palmitoyl cysteine lipid modification. Cysteine 17 carries the S-diacylglycerol cysteine lipid modification.

Belongs to the outer membrane factor (OMF) (TC 1.B.17) family.

The protein localises to the cell outer membrane. Probable outer membrane component of the SepABC efflux pump with unknown specificity. This Pseudomonas putida (strain ATCC 700007 / DSM 6899 / JCM 31910 / BCRC 17059 / LMG 24140 / F1) protein is Probable efflux pump outer membrane protein SepC (sepC).